Reading from the N-terminus, the 372-residue chain is MASNEDFSITQDLEIPADIVELHDINVEPLPMEDIPTESVQYEDVDGNWIYGGHNHPPLMVLQPLFTNTGYGDHDQEMLMLQTQEEVVGYCDSDNQLGNDLEDQLALPDSIEDEHFQMTLASLSASAASTSTSTQSRSKKPSKKPSGKSATSTEANPAGSSSSLGTRKWEQKQMQVKTLEGEFSVTMWSPNDNNDQGAVGEGQAENPPDYSEYLKGKKLPPGGLPGIDLSDPKQLAEFTKVKPKRSKGEPPKTVPCSYSGCEKMFRDYAAMRKHLHIHGPRVHVCAECGKAFLESSKLRRHQLVHTGEKPFQCTFEGCGKRFSLDFNLRTHLRIHTGDKPFVCPFDVCNRKFAQSTNLKTHILTHVKTKNNP.

The mediates transcriptional activation stretch occupies residues 32-102; sequence MEDIPTESVQ…SDNQLGNDLE (71 aa). The span at 126–136 shows a compositional bias: low complexity; that stretch reads SAASTSTSTQS. 2 disordered regions span residues 126–172 and 186–210; these read SAAS…WEQK and TMWS…PPDY. Residues 137–146 show a composition bias toward basic residues; it reads RSKKPSKKPS. Polar residues-rich tracts occupy residues 154-165 and 186-196; these read EANPAGSSSSLG and TMWSPNDNNDQ. The mediates transcriptional repression stretch occupies residues 237 to 372; that stretch reads EFTKVKPKRS…LTHVKTKNNP (136 aa). 4 C2H2-type zinc fingers span residues 254-278, 283-305, 311-335, and 341-365; these read VPCS…LHIH, HVCA…QLVH, FQCT…LRIH, and FVCP…ILTH.

Belongs to the YY transcription factor family. Expressed in kidney, liver, spleen and testis but not in colon.

The protein localises to the nucleus. Its function is as follows. Functions as a multifunctional transcription factor that may exhibit positive and negative control on a large number of genes. May antagonize YY1 and function in development and differentiation. The polypeptide is Transcription factor YY2 (YY2) (Homo sapiens (Human)).